Here is a 337-residue protein sequence, read N- to C-terminus: 5-dehydro-2-deoxygluconokinase (337 aa).

Belongs to the carbohydrate kinase PfkB family.

The catalysed reaction is 5-dehydro-2-deoxy-D-gluconate + ATP = 6-phospho-5-dehydro-2-deoxy-D-gluconate + ADP + H(+). The protein operates within polyol metabolism; myo-inositol degradation into acetyl-CoA; acetyl-CoA from myo-inositol: step 5/7. Catalyzes the phosphorylation of 5-dehydro-2-deoxy-D-gluconate (2-deoxy-5-keto-D-gluconate or DKG) to 6-phospho-5-dehydro-2-deoxy-D-gluconate (DKGP). The chain is 5-dehydro-2-deoxygluconokinase from Geobacillus thermodenitrificans (strain NG80-2).